The sequence spans 586 residues: Kelch-like protein 7 (586 aa).

Residues 44-111 (CDVILTVQER…AYTARISVNS (68 aa)) form the BTB domain. Residues 146 to 248 (CLGISVLAEC…SKNFLSKTVQ (103 aa)) form the BACK domain. 6 Kelch repeats span residues 294-336 (RIAL…FWDN), 337-382 (VVYI…AAEG), 383-430 (KIYT…EANG), 431-481 (LIYV…FVKD), 483-528 (IFAV…AVGS), and 530-575 (IYVL…CVVD).

Homodimer. Component of the BCR(KLHL7) E3 ubiquitin ligase complex, at least composed of CUL3 and KLHL7 and RBX1.

The protein localises to the nucleus. It localises to the cytoplasm. Its pathway is protein modification; protein ubiquitination. Functionally, substrate-specific adapter of a BCR (BTB-CUL3-RBX1) E3 ubiquitin ligase complex. The BCR(KLHL7) complex acts by mediating ubiquitination and subsequent degradation of substrate proteins. Probably mediates 'Lys-48'-linked ubiquitination. This Mus musculus (Mouse) protein is Kelch-like protein 7 (Klhl7).